The following is a 288-amino-acid chain: Glycine--tRNA ligase alpha subunit (288 aa).

This sequence belongs to the class-II aminoacyl-tRNA synthetase family. As to quaternary structure, tetramer of two alpha and two beta subunits.

The protein localises to the cytoplasm. It catalyses the reaction tRNA(Gly) + glycine + ATP = glycyl-tRNA(Gly) + AMP + diphosphate. This chain is Glycine--tRNA ligase alpha subunit, found in Rickettsia canadensis (strain McKiel).